We begin with the raw amino-acid sequence, 148 residues long: Large ribosomal subunit protein uL15 (148 aa).

Residues 12–52 (ERKNRKRVGRGGGSGWGGTSGKGHKGQNARSGGGVPAWFEG) form a disordered region. Over residues 21–32 (RGGGSGWGGTSG) the composition is skewed to gly residues.

It belongs to the universal ribosomal protein uL15 family. As to quaternary structure, part of the 50S ribosomal subunit.

In terms of biological role, binds to the 23S rRNA. This is Large ribosomal subunit protein uL15 from Maridesulfovibrio salexigens (strain ATCC 14822 / DSM 2638 / NCIMB 8403 / VKM B-1763) (Desulfovibrio salexigens).